The chain runs to 1582 residues: ATP-binding cassette sub-family C member 8 (1582 aa).

The Extracellular segment spans residues 1-30 (MPLAFCGTENHSAAYRVDQGVLNNGCFVDA). A disulfide bridge connects residues C6 and C26. N-linked (GlcNAc...) asparagine glycosylation is present at N10. Residues 31 to 47 (LNVVPHVFLLFITFPIL) form a helical membrane-spanning segment. At 48 to 72 (FIGWGSQSSKVHIHHSTWLHFPGHN) the chain is on the cytoplasmic side. A helical membrane pass occupies residues 73 to 89 (LRWILTFILLFVLVCEI). Residues 90–106 (AEGILSDGVTESRHLHL) lie on the Extracellular side of the membrane. A helical transmembrane segment spans residues 107-123 (YMPAGMAFMAAITSVVY). Residues 124 to 136 (YHNIETSNFPKLL) are Cytoplasmic-facing. Residues 137-153 (IALLIYWTLAFITKTIK) traverse the membrane as a helical segment. Topologically, residues 154–169 (FVKFYDHAIGFSQLRF) are extracellular. A helical membrane pass occupies residues 170–186 (CLTGLLVILYGMLLLVE). Topologically, residues 187–303 (VNVIRVRRYV…AFGRRLVLSS (117 aa)) are cytoplasmic. Residues 299 to 602 (LVLSSTFRIL…LSSVVRSTVK (304 aa)) form the ABC transmembrane type-1 1 domain. Residues 304 to 319 (TFRILADLLGFAGPLC) traverse the membrane as a helical segment. Residues 320-356 (IFGIVDHLGKENHVFQPKTQFLGVYFVSSQEFLGNAY) lie on the Extracellular side of the membrane. Residues 357-372 (VLAVLLFLALLLQRTF) traverse the membrane as a helical segment. At 373–438 (LQASYYVAIE…MWFFFLCPNL (66 aa)) the chain is on the cytoplasmic side. A helical membrane pass occupies residues 439–454 (WAMPVQIIVGVILLYY). Residues 455–460 (ILGVSA) lie on the Extracellular side of the membrane. A helical transmembrane segment spans residues 461-473 (LIGAAVIILLAPV). The Cytoplasmic segment spans residues 474–541 (QYFVATKLSQ…SLRAFAVYTS (68 aa)). The chain crosses the membrane as a helical span at residues 542–557 (ISIFMNTAIPIAAVLI). The Extracellular portion of the chain corresponds to 558 to 576 (TFVGHVSFFKESDFSPSVA). The helical transmembrane segment at 577–592 (FASLSLFHILVTPLFL) threads the bilayer. Over 593–1013 (LSSVVRSTVK…YLSSAGILLL (421 aa)) the chain is Cytoplasmic. In terms of domain architecture, ABC transporter 1 spans 679 to 930 (VQIIGGFFTW…ECQLFEHWKT (252 aa)). 4 residues coordinate ATP: W688, G716, S720, and S721. S720 provides a ligand contact to Mg(2+). Positions 741–768 (SSLPDSEGEDPSNPERETAADSDARSRG) are disordered. The span at 753-766 (NPERETAADSDARS) shows a compositional bias: basic and acidic residues. Q775 is a Mg(2+) binding site. Basic and acidic residues predominate over residues 939–950 (LEKETVMERKAP). Residues 939 to 962 (LEKETVMERKAPEPSQGLPRAMSS) are disordered. One can recognise an ABC transmembrane type-1 2 domain in the interval 1013-1307 (LSLLVFSQLL…MVRNLADMEI (295 aa)). Residues 1014–1031 (SLLVFSQLLKHMVLVAID) traverse the membrane as a helical segment. Residues 1032–1067 (YWLAKWTDSALVLSPAARNCSLSQECALDQSVYAMV) lie on the Extracellular side of the membrane. N1050 carries N-linked (GlcNAc...) asparagine glycosylation. A helical membrane pass occupies residues 1068–1084 (FTVLCSLGIALCLVTSV). Topologically, residues 1085–1143 (TVEWTGLKVAKRLHRSLLNRIILAPMRFFETTPLGSILNRFSSDCNTIDQHIPSTLECL) are cytoplasmic. Residues 1144–1161 (SRSTLLCVSALAVISYVT) traverse the membrane as a helical segment. P1162 is a topological domain (extracellular). Residues 1163–1175 (VFLVALLPLAVVC) traverse the membrane as a helical segment. Over 1176–1249 (YFIQKYFRVA…FLTAANRWLE (74 aa)) the chain is Cytoplasmic. Residues 1250-1265 (VRMEYIGACVVLIAAA) form a helical membrane-spanning segment. Residues 1266-1281 (TSISNSLHRELSAGLV) are Extracellular-facing. A helical membrane pass occupies residues 1282 to 1297 (GLGLTYALMVSNYLNW). The Cytoplasmic portion of the chain corresponds to 1298-1582 (MVRNLADMEI…VFASFVRADK (285 aa)). The ABC transporter 2 domain maps to 1345–1579 (IQIQNLSVRY…KDSVFASFVR (235 aa)). Residues T1381, G1382, G1384, K1385, S1386, and S1387 each coordinate ADP. S1483 provides a ligand contact to ATP.

It belongs to the ABC transporter superfamily. ABCC family. Conjugate transporter (TC 3.A.1.208) subfamily. In terms of assembly, forms an heterooctamer with KCNJ11; four ABCC8/SUR1 molecules interact with one KCNJ11 homotetramer.

It localises to the cell membrane. KATP channels are regulated by cytoplasmic ATP/ADP ratios; ATP inhibits the channel by closing the pore, while ADP activates the channel. Activated by phosphatidylinositol 4,5-biphosphate (PtdIns(4,5)P2). Functionally, regulator subunit of pancreatic ATP-sensitive potassium channel (KATP), playing a major role in the regulation of insulin release. In pancreatic cells, it forms KATP channels with KCNJ11; KCNJ11 forms the channel pore while ABCC8 is required for activation and regulation. This is ATP-binding cassette sub-family C member 8 (Abcc8) from Rattus norvegicus (Rat).